A 794-amino-acid chain; its full sequence is Transcription factor TOG1 (794 aa).

The Zn(2+) site is built by Cys-18, Cys-21, Cys-28, Cys-34, Cys-37, and Cys-44. A DNA-binding region (zn(2)-C6 fungal-type) is located at residues 18-44 (CDRCHRKKIKCNSKKPCFGCIGSQSKC).

It is found in the nucleus. Its function is as follows. Transcriptional activator required for growth on non-fermentable carbon sources and that regulates genes involved in fatty acid utilization. Acts as a direct activator that binds the promoters of oleate utilizing genes, encoded key enzymes in beta-oxidation and NADPH regeneration (POX1, FOX2,POT1 and IDP2), the glyoxylate shunt (MLS1 and ICL1), and gluconeogenesis (PCK1 and FBP1). Also regulates the abundance of peroxisomes that are vital for fatty acid oxidation. The chain is Transcription factor TOG1 from Saccharomyces cerevisiae (strain ATCC 204508 / S288c) (Baker's yeast).